The following is a 299-amino-acid chain: Coenzyme PQQ synthesis protein B (299 aa).

Belongs to the PqqB family.

It functions in the pathway cofactor biosynthesis; pyrroloquinoline quinone biosynthesis. In terms of biological role, may be involved in the transport of PQQ or its precursor to the periplasm. The sequence is that of Coenzyme PQQ synthesis protein B from Methylorubrum populi (strain ATCC BAA-705 / NCIMB 13946 / BJ001) (Methylobacterium populi).